A 340-amino-acid polypeptide reads, in one-letter code: Dihydroorotate dehydrogenase (quinone) (340 aa).

FMN-binding positions include 61–65 (AGLDK) and threonine 85. Substrate is bound at residue lysine 65. 110–114 (NRMGF) serves as a coordination point for substrate. FMN-binding residues include asparagine 138 and asparagine 171. A substrate-binding site is contributed by asparagine 171. Serine 174 acts as the Nucleophile in catalysis. Asparagine 176 contributes to the substrate binding site. FMN is bound by residues lysine 216 and threonine 244. 245–246 (NT) lines the substrate pocket. FMN-binding positions include glycine 267, glycine 296, and 317–318 (YS).

Belongs to the dihydroorotate dehydrogenase family. Type 2 subfamily. As to quaternary structure, monomer. Requires FMN as cofactor.

It localises to the cell membrane. It catalyses the reaction (S)-dihydroorotate + a quinone = orotate + a quinol. It functions in the pathway pyrimidine metabolism; UMP biosynthesis via de novo pathway; orotate from (S)-dihydroorotate (quinone route): step 1/1. Its function is as follows. Catalyzes the conversion of dihydroorotate to orotate with quinone as electron acceptor. This is Dihydroorotate dehydrogenase (quinone) from Pseudomonas putida (strain ATCC 47054 / DSM 6125 / CFBP 8728 / NCIMB 11950 / KT2440).